The sequence spans 275 residues: U6 snRNA phosphodiesterase 1 (275 aa).

Residues 1–25 (MEFLKHYEDDEDQDDENNTKDENVN) form a disordered region. Catalysis depends on histidine 122, which acts as the Proton acceptor. AMP contacts are provided by residues 122 to 124 (HIS), tyrosine 206, and 208 to 214 (NPEPHLS). UMP contacts are provided by residues tyrosine 206 and 210–214 (EPHLS). Catalysis depends on histidine 212, which acts as the Proton donor.

The protein belongs to the 2H phosphoesterase superfamily. USB1 family.

Its subcellular location is the nucleus. The catalysed reaction is a 3'-end uridylyl-uridine-RNA = a 3'-end 2',3'-cyclophospho-uridine-RNA + uridine. Its function is as follows. 3'-5' RNA exonuclease that trims the 3' end of oligo(U) tracts of the pre-U6 small nuclear RNA (snRNA) molecule, leading to the formation of a mature U6 snRNA 3' end-terminated with a 2',3'-cyclic phosphate. Participates in the U6 snRNA 3' end processing that prevents U6 snRNA degradation. The chain is U6 snRNA phosphodiesterase 1 from Dictyostelium discoideum (Social amoeba).